A 480-amino-acid chain; its full sequence is UDP-glycosyltransferase 71C5 (480 aa).

Residues Ser-290, 349 to 351, 366 to 374, and 388 to 391 contribute to the UDP-alpha-D-glucose site; these read APQ, HCGWNSVQE, and YAEQ.

This sequence belongs to the UDP-glycosyltransferase family.

Possesses low quercetin 3-O-glucosyltransferase activity in vitro. The chain is UDP-glycosyltransferase 71C5 (UGT71C5) from Arabidopsis thaliana (Mouse-ear cress).